Here is a 189-residue protein sequence, read N- to C-terminus: Parkinson disease protein 7 (189 aa).

N-acetylalanine is present on Ala-2. S-palmitoyl cysteine attachment occurs at residues Cys-46 and Cys-53. Tyr-67 bears the Phosphotyrosine mark. The active-site Nucleophile is the Cys-106. Cys-106 carries the post-translational modification Cysteine sulfinic acid (-SO2H); alternate. A lipid anchor (S-palmitoyl cysteine; alternate) is attached at Cys-106. The active site involves His-126. Lys-130 participates in a covalent cross-link: Glycyl lysine isopeptide (Lys-Gly) (interchain with G-Cter in SUMO). Lys-148 is modified (N6-acetyllysine). Lys-182 bears the N6-succinyllysine mark.

This sequence belongs to the peptidase C56 family. Homodimer. Binds EFCAB6/DJBP and PIAS2. Part of a ternary complex containing PARK7, EFCAB6/DJBP and AR. Interacts (via N-terminus) with OTUD7B. Interacts with BBS1, HIPK1, CLCF1 and MTERF. Forms a complex with PINK1 and PRKN. Interacts (via C-terminus) with NCF1; the interaction is enhanced by LPS and modulates NCF1 phosphorylation and membrane translocation. Interacts with NENF. The cofactor is Deglycase activity does not require glutathione as a cofactor, however, glycated glutathione constitutes a PARK7 substrate.. In terms of processing, sumoylated on Lys-130 by PIAS2 or PIAS4; which is enhanced after ultraviolet irradiation and essential for cell-growth promoting activity and transforming activity. Post-translationally, cys-106 is easily oxidized to sulfinic acid. Undergoes cleavage of a C-terminal peptide and subsequent activation of protease activity in response to oxidative stress. In terms of tissue distribution, highly expressed in pancreas, kidney, skeletal muscle, liver, testis and heart. Detected at slightly lower levels in placenta and brain (at protein level). Detected in astrocytes, Sertoli cells, spermatogonia, spermatids and spermatozoa. Expressed by pancreatic islets at higher levels than surrounding exocrine tissues.

It localises to the cell membrane. Its subcellular location is the cytoplasm. The protein resides in the nucleus. It is found in the membrane raft. The protein localises to the mitochondrion. It localises to the endoplasmic reticulum. The catalysed reaction is N(omega)-(1-hydroxy-2-oxopropyl)-L-arginyl-[protein] + H2O = lactate + L-arginyl-[protein] + H(+). It carries out the reaction N(6)-(1-hydroxy-2-oxopropyl)-L-lysyl-[protein] + H2O = lactate + L-lysyl-[protein] + H(+). It catalyses the reaction S-(1-hydroxy-2-oxopropyl)-L-cysteinyl-[protein] + H2O = lactate + L-cysteinyl-[protein] + H(+). The enzyme catalyses N(omega)-(1-hydroxy-2-oxoethyl)-L-arginyl-[protein] + H2O = L-arginyl-[protein] + glycolate + H(+). The catalysed reaction is N(6)-(1-hydroxy-2-oxoethyl)-L-lysyl-[protein] + H2O = glycolate + L-lysyl-[protein] + H(+). It carries out the reaction S-(1-hydroxy-2-oxoethyl)-L-cysteinyl-[protein] + H2O = glycolate + L-cysteinyl-[protein] + H(+). It catalyses the reaction N(2)-(1-hydroxy-2-oxopropyl)-dGTP + H2O = lactate + dGTP + H(+). The enzyme catalyses N(2)-(1-hydroxy-2-oxopropyl)-GTP + H2O = lactate + GTP + H(+). The catalysed reaction is N(2)-(1-hydroxy-2-oxopropyl)-GDP + H2O = lactate + GDP + H(+). It carries out the reaction N(2)-(1-hydroxy-2-oxopropyl)-GMP + H2O = lactate + GMP + H(+). It catalyses the reaction N(2)-(1-hydroxy-2-oxoethyl)-dGTP + H2O = dGTP + glycolate + H(+). The enzyme catalyses N(2)-(1-hydroxy-2-oxoethyl)-GTP + H2O = glycolate + GTP + H(+). The catalysed reaction is N(2)-(1-hydroxy-2-oxoethyl)-GDP + H2O = glycolate + GDP + H(+). It carries out the reaction N(2)-(1-hydroxy-2-oxoethyl)-GMP + H2O = glycolate + GMP + H(+). It catalyses the reaction an N(2)-(1-hydroxy-2-oxopropyl)-guanosine in RNA + H2O = a guanosine in RNA + lactate + H(+). The enzyme catalyses an N(2)-(1-hydroxy-2-oxopropyl)-2'-deoxyguanosine in DNA + H2O = a 2'-deoxyguanosine in DNA + lactate + H(+). The catalysed reaction is an N(2)-(1-hydroxy-2-oxoethyl)-guanosine in RNA + H2O = a guanosine in RNA + glycolate + H(+). It carries out the reaction an N(2)-(1-hydroxy-2-oxoethyl)-2'-deoxyguanosine in DNA + H2O = a 2'-deoxyguanosine in DNA + glycolate + H(+). In terms of biological role, multifunctional protein with controversial molecular function which plays an important role in cell protection against oxidative stress and cell death acting as oxidative stress sensor and redox-sensitive chaperone and protease. It is involved in neuroprotective mechanisms like the stabilization of NFE2L2 and PINK1 proteins, male fertility as a positive regulator of androgen signaling pathway as well as cell growth and transformation through, for instance, the modulation of NF-kappa-B signaling pathway. Has been described as a protein and nucleotide deglycase that catalyzes the deglycation of the Maillard adducts formed between amino groups of proteins or nucleotides and reactive carbonyl groups of glyoxals. But this function is rebuted by other works. As a protein deglycase, repairs methylglyoxal- and glyoxal-glycated proteins, and releases repaired proteins and lactate or glycolate, respectively. Deglycates cysteine, arginine and lysine residues in proteins, and thus reactivates these proteins by reversing glycation by glyoxals. Acts on early glycation intermediates (hemithioacetals and aminocarbinols), preventing the formation of advanced glycation endproducts (AGE) that cause irreversible damage. Also functions as a nucleotide deglycase able to repair glycated guanine in the free nucleotide pool (GTP, GDP, GMP, dGTP) and in DNA and RNA. Is thus involved in a major nucleotide repair system named guanine glycation repair (GG repair), dedicated to reversing methylglyoxal and glyoxal damage via nucleotide sanitization and direct nucleic acid repair. Protects histones from adduction by methylglyoxal, controls the levels of methylglyoxal-derived argininine modifications on chromatin. Able to remove the glycations and restore histone 3, histone glycation disrupts both local and global chromatin architecture by altering histone-DNA interactions as well as histone acetylation and ubiquitination levels. Displays a very low glyoxalase activity that may reflect its deglycase activity. Eliminates hydrogen peroxide and protects cells against hydrogen peroxide-induced cell death. Required for correct mitochondrial morphology and function as well as for autophagy of dysfunctional mitochondria. Plays a role in regulating expression or stability of the mitochondrial uncoupling proteins SLC25A14 and SLC25A27 in dopaminergic neurons of the substantia nigra pars compacta and attenuates the oxidative stress induced by calcium entry into the neurons via L-type channels during pacemaking. Regulates astrocyte inflammatory responses, may modulate lipid rafts-dependent endocytosis in astrocytes and neuronal cells. In pancreatic islets, involved in the maintenance of mitochondrial reactive oxygen species (ROS) levels and glucose homeostasis in an age- and diet dependent manner. Protects pancreatic beta cells from cell death induced by inflammatory and cytotoxic setting. Binds to a number of mRNAs containing multiple copies of GG or CC motifs and partially inhibits their translation but dissociates following oxidative stress. Metal-binding protein able to bind copper as well as toxic mercury ions, enhances the cell protection mechanism against induced metal toxicity. In macrophages, interacts with the NADPH oxidase subunit NCF1 to direct NADPH oxidase-dependent ROS production, and protects against sepsis. This chain is Parkinson disease protein 7, found in Homo sapiens (Human).